The chain runs to 258 residues: Deoxyribose-phosphate aldolase (258 aa).

Catalysis depends on Asp-101, which acts as the Proton donor/acceptor. The Schiff-base intermediate with acetaldehyde role is filled by Lys-166. Lys-200 acts as the Proton donor/acceptor in catalysis.

It belongs to the DeoC/FbaB aldolase family. DeoC type 2 subfamily.

It localises to the cytoplasm. The catalysed reaction is 2-deoxy-D-ribose 5-phosphate = D-glyceraldehyde 3-phosphate + acetaldehyde. It participates in carbohydrate degradation; 2-deoxy-D-ribose 1-phosphate degradation; D-glyceraldehyde 3-phosphate and acetaldehyde from 2-deoxy-alpha-D-ribose 1-phosphate: step 2/2. In terms of biological role, catalyzes a reversible aldol reaction between acetaldehyde and D-glyceraldehyde 3-phosphate to generate 2-deoxy-D-ribose 5-phosphate. The sequence is that of Deoxyribose-phosphate aldolase from Actinobacillus pleuropneumoniae serotype 7 (strain AP76).